Reading from the N-terminus, the 233-residue chain is MSEAKTLLVGGLWKNNSALVQLLGLCPLLAVTSTATNALGLGLATTLVLTCTNSAISLSRRWVPAEIRIPIYVMIIAAVVSCVQMLINAYAYGLYQSLGIFIPLIVTNCIVVGRAEAVASKSSVPLSALDGMAIGLGATSVMVVLGSIREIIGNGTIFNGADQLLGPWAKAMHIQVVHFDSPMLLAMLPPGAFIGLGMLLAAKYLIDNKMKQRATLKAESQAQGLPEGKTGAL.

Helical transmembrane passes span 22–42 (LLGLCPLLAVTSTATNALGLG), 69–89 (IPIYVMIIAAVVSCVQMLINA), 93–113 (GLYQSLGIFIPLIVTNCIVVG), 128–148 (ALDGMAIGLGATSVMVVLGSI), and 182–202 (PMLLAMLPPGAFIGLGMLLAA).

Belongs to the NqrDE/RnfAE family. The complex is composed of six subunits: RnfA, RnfB, RnfC, RnfD, RnfE and RnfG.

The protein localises to the cell inner membrane. Functionally, part of a membrane-bound complex that couples electron transfer with translocation of ions across the membrane. This is Ion-translocating oxidoreductase complex subunit E from Erwinia tasmaniensis (strain DSM 17950 / CFBP 7177 / CIP 109463 / NCPPB 4357 / Et1/99).